The sequence spans 592 residues: ATP-dependent lipid A-core flippase (592 aa).

The next 6 membrane-spanning stretches (helical) occupy residues 31 to 51 (LSSF…EGII), 76 to 96 (AMLV…TYFL), 134 to 154 (AVIF…ITLV), 161 to 181 (LALL…VAVI), 261 to 281 (VTQF…MVQA), and 288 to 308 (VGGF…LKHL). The ABC transmembrane type-1 domain occupies 35–317 (ILAMVAMGVV…LTDVNQPMQR (283 aa)). Residues 349-587 (LRFEHVTFRY…DGLYAGLHRI (239 aa)) form the ABC transporter domain. 383–390 (GPSGSGKT) serves as a coordination point for ATP.

Belongs to the ABC transporter superfamily. Lipid exporter (TC 3.A.1.106) family. As to quaternary structure, homodimer.

It is found in the cell inner membrane. The enzyme catalyses ATP + H2O + lipid A-core oligosaccharideSide 1 = ADP + phosphate + lipid A-core oligosaccharideSide 2.. Involved in lipopolysaccharide (LPS) biosynthesis. Translocates lipid A-core from the inner to the outer leaflet of the inner membrane. Transmembrane domains (TMD) form a pore in the inner membrane and the ATP-binding domain (NBD) is responsible for energy generation. The protein is ATP-dependent lipid A-core flippase of Ralstonia nicotianae (strain ATCC BAA-1114 / GMI1000) (Ralstonia solanacearum).